Consider the following 445-residue polypeptide: Phosphoglucosamine mutase (445 aa).

The active-site Phosphoserine intermediate is S102. Mg(2+)-binding residues include S102, D241, D243, and D245. Phosphoserine is present on S102.

Belongs to the phosphohexose mutase family. The cofactor is Mg(2+). In terms of processing, activated by phosphorylation.

The catalysed reaction is alpha-D-glucosamine 1-phosphate = D-glucosamine 6-phosphate. Its function is as follows. Catalyzes the conversion of glucosamine-6-phosphate to glucosamine-1-phosphate. The sequence is that of Phosphoglucosamine mutase from Shewanella baltica (strain OS155 / ATCC BAA-1091).